The sequence spans 471 residues: Apyrase 1 (471 aa).

Topologically, residues 1 to 21 (MTAKRAIGRHESLADKVHRHR) are cytoplasmic. The helical; Signal-anchor for type II membrane protein transmembrane segment at 22–42 (GLLLVISIPIVLIALVLLLMP) threads the bilayer. Residues 43-471 (GTSTSVSVIE…GSAIEAVSSP (429 aa)) are Lumenal-facing. 72 to 82 (VIFDAGSSGSR) provides a ligand contact to ATP. The active-site Proton acceptor is the E194. 218–228 (GVVDLGGGSVQ) contributes to the ATP binding site. N333 carries N-linked (GlcNAc...) asparagine glycosylation.

This sequence belongs to the GDA1/CD39 NTPase family. Ca(2+) is required as a cofactor. In terms of tissue distribution, expressed in roots, root hairs, root cap, leaves, stems, trichomes, phloem throughout the plant, guard cells, filaments of young stamens, stipules, papillae of stigmas, pollen, pollen tubes and the abscission zone of siliques.

It is found in the golgi apparatus membrane. It localises to the membrane. It carries out the reaction a ribonucleoside 5'-triphosphate + 2 H2O = a ribonucleoside 5'-phosphate + 2 phosphate + 2 H(+). Functionally, catalyzes the hydrolysis of phosphoanhydride bonds of nucleoside tri- and di-phosphates. Substrate preference is ATP &gt; ADP. Functions with APY2 to reduce extracellular ATP level which is essential for pollen germination and normal plant development. Plays a role in the regulation of stomatal function by modulating extracellular ATP levels in guard cells. This Arabidopsis thaliana (Mouse-ear cress) protein is Apyrase 1 (APY1).